Here is a 224-residue protein sequence, read N- to C-terminus: Small ribosomal subunit protein uS3 (224 aa).

The KH type-2 domain maps to 20–89 (LDEFLANYFK…NVNITVSPVP (70 aa)).

It belongs to the universal ribosomal protein uS3 family. Part of the 30S ribosomal subunit.

Binds the lower part of the 30S subunit head. The sequence is that of Small ribosomal subunit protein uS3 from Staphylothermus marinus (strain ATCC 43588 / DSM 3639 / JCM 9404 / F1).